The following is a 108-amino-acid chain: UPF0060 membrane protein YnfA (108 aa).

At 1–5 the chain is on the periplasmic side; sequence MLKTT. The chain crosses the membrane as a helical span at residues 6 to 26; it reads LLFFVTALCEIIGCFLPWLWI. Residues 27–30 are Cytoplasmic-facing; it reads KRGA. The helical transmembrane segment at 31–51 threads the bilayer; sequence SVWWLLPAAASLALFVWLLTL. Over 52-60 the chain is Periplasmic; that stretch reads HPAASGRVY. A helical membrane pass occupies residues 61–81; the sequence is AAYGGVYVCTALLWLRVVDGV. Over 82–84 the chain is Cytoplasmic; the sequence is RLT. A helical transmembrane segment spans residues 85 to 105; that stretch reads VYDWCGALIALCGMLIIVVGW. At 106–108 the chain is on the periplasmic side; the sequence is GRT.

It belongs to the UPF0060 family.

The protein localises to the cell inner membrane. The polypeptide is UPF0060 membrane protein YnfA (Salmonella paratyphi A (strain ATCC 9150 / SARB42)).